The sequence spans 674 residues: DNA ligase (674 aa).

Residues 34-38 (DAEYD), 84-85 (SL), and E116 each bind NAD(+). The N6-AMP-lysine intermediate role is filled by K118. NAD(+)-binding residues include R139, E174, K291, and K315. Zn(2+) is bound by residues C409, C412, C425, and C430. Residues 586–674 (REGEALKGLT…TGKDPRALTA (89 aa)) enclose the BRCT domain.

The protein belongs to the NAD-dependent DNA ligase family. LigA subfamily. The cofactor is Mg(2+). Mn(2+) serves as cofactor.

The catalysed reaction is NAD(+) + (deoxyribonucleotide)n-3'-hydroxyl + 5'-phospho-(deoxyribonucleotide)m = (deoxyribonucleotide)n+m + AMP + beta-nicotinamide D-nucleotide.. Functionally, DNA ligase that catalyzes the formation of phosphodiester linkages between 5'-phosphoryl and 3'-hydroxyl groups in double-stranded DNA using NAD as a coenzyme and as the energy source for the reaction. It is essential for DNA replication and repair of damaged DNA. The chain is DNA ligase from Thermus sp. (strain AK16D).